A 258-amino-acid chain; its full sequence is Axonemal dynein light intermediate polypeptide 1 (258 aa).

Disordered regions lie at residues 1–60 (MIPP…CVPD) and 202–231 (DLER…EEKK). Residues 176–255 (MRKALQAEQG…LKAQLEGIIA (80 aa)) are a coiled coil.

The protein belongs to the inner dynein arm light chain family. Interacts with CFAP45. Interacts with DYNC1H1.

It is found in the cell projection. The protein resides in the cilium. The protein localises to the flagellum. Its subcellular location is the dynein axonemal particle. It localises to the cytoplasm. Functionally, involved in sperm flagellum assembly. This Rattus norvegicus (Rat) protein is Axonemal dynein light intermediate polypeptide 1.